Reading from the N-terminus, the 306-residue chain is Secreted RxLR effector protein 76 (306 aa).

Residues 1-21 (MSGAFYVFTALLLVASDQIAA) form the signal peptide. Residues 48-65 (RFLRGSRDEPDNLANEER) carry the RxLR-dEER motif. The segment at 105–142 (AAKAVKKRPRGAKAGRKMPRAAEAEAVKKVPRAGTAVK) is disordered. A compositionally biased stretch (basic residues) spans 107-123 (KAVKKRPRGAKAGRKMP).

Belongs to the RxLR effector family.

Its subcellular location is the secreted. The protein localises to the host nucleus. Functionally, secreted effector that partially suppresses the host cell death induced by cell death-inducing proteins. The chain is Secreted RxLR effector protein 76 from Plasmopara viticola (Downy mildew of grapevine).